We begin with the raw amino-acid sequence, 340 residues long: Deubiquitinase SseL (340 aa).

His222 is an active-site residue. The active-site Nucleophile is the Cys284.

The protein belongs to the peptidase C79 family.

It is found in the secreted. Its subcellular location is the host cytoplasm. Functionally, effector proteins function to alter host cell physiology and promote bacterial survival in host tissues. This protease targets the host cell ubiquitin pathway by acting as a deubiquitinase in infected host cells. The chain is Deubiquitinase SseL (sseL) from Salmonella arizonae (strain ATCC BAA-731 / CDC346-86 / RSK2980).